The following is a 376-amino-acid chain: Transmembrane protein 183A (376 aa).

Disordered stretches follow at residues 1–20 (MARG…AMPK) and 100–127 (MDAQ…ELDG). The chain crosses the membrane as a helical span at residues 300–320 (LNFIFIPIVMGMIFTLFTINV).

This sequence belongs to the TMEM183 family.

It is found in the membrane. This chain is Transmembrane protein 183A (TMEM183A), found in Homo sapiens (Human).